A 340-amino-acid chain; its full sequence is GTPase Obg (340 aa).

An Obg domain is found at 1–159 (MKFLDQAKVY…RTLWLRLKLI (159 aa)). Positions 160–327 (ADAGIIGLPN…LLRAGAHIIE (168 aa)) constitute an OBG-type G domain. GTP contacts are provided by residues 166 to 173 (GLPNAGKS), 191 to 195 (FTTLY), 212 to 215 (DIPG), 279 to 282 (SQID), and 308 to 310 (SAV). Positions 173 and 193 each coordinate Mg(2+).

It belongs to the TRAFAC class OBG-HflX-like GTPase superfamily. OBG GTPase family. Monomer. Mg(2+) serves as cofactor.

It is found in the cytoplasm. In terms of biological role, an essential GTPase which binds GTP, GDP and possibly (p)ppGpp with moderate affinity, with high nucleotide exchange rates and a fairly low GTP hydrolysis rate. Plays a role in control of the cell cycle, stress response, ribosome biogenesis and in those bacteria that undergo differentiation, in morphogenesis control. The polypeptide is GTPase Obg (Bartonella henselae (strain ATCC 49882 / DSM 28221 / CCUG 30454 / Houston 1) (Rochalimaea henselae)).